We begin with the raw amino-acid sequence, 579 residues long: Rop guanine nucleotide exchange factor 6 (579 aa).

Positions 31 to 61 are enriched in low complexity; it reads ESTTDSSLSSSSSGVGSSSGRSSVAERSVSS. Positions 31 to 89 are disordered; the sequence is ESTTDSSLSSSSSGVGSSSGRSSVAERSVSSPPTKSQILGWPLGQGSWRKSSGKMKKKT. One can recognise a PRONE domain in the interval 98–479; the sequence is FKRVGTETSE…DISKDDGDGD (382 aa).

In terms of biological role, guanine-nucleotide exchange factor (GEF) that acts as an activator of Rop (Rho of plants) GTPases by promoting the exchange of GDP for GTP. In Arabidopsis thaliana (Mouse-ear cress), this protein is Rop guanine nucleotide exchange factor 6 (ROPGEF6).